Reading from the N-terminus, the 320-residue chain is ATP-dependent 6-phosphofructokinase (320 aa).

An ATP-binding site is contributed by Gly-11. 21–25 contributes to the ADP binding site; sequence RAVVR. ATP-binding positions include 72–73 and 102–105; these read RC and GDGS. Position 103 (Asp-103) interacts with Mg(2+). Residue 125–127 participates in substrate binding; it reads TID. Asp-127 serves as the catalytic Proton acceptor. Arg-154 is an ADP binding site. Substrate contacts are provided by residues Arg-162 and 169–171; that span reads MGR. ADP-binding positions include 185-187 and 214-216; these read GAE and KTH. Substrate contacts are provided by residues Glu-223, Arg-244, and 250 to 253; that span reads HIQR.

The protein belongs to the phosphofructokinase type A (PFKA) family. ATP-dependent PFK group I subfamily. Prokaryotic clade 'B1' sub-subfamily. As to quaternary structure, homotetramer. Requires Mg(2+) as cofactor.

The protein resides in the cytoplasm. It carries out the reaction beta-D-fructose 6-phosphate + ATP = beta-D-fructose 1,6-bisphosphate + ADP + H(+). It functions in the pathway carbohydrate degradation; glycolysis; D-glyceraldehyde 3-phosphate and glycerone phosphate from D-glucose: step 3/4. Its activity is regulated as follows. Allosterically activated by ADP and other diphosphonucleosides, and allosterically inhibited by phosphoenolpyruvate. In terms of biological role, catalyzes the phosphorylation of D-fructose 6-phosphate to fructose 1,6-bisphosphate by ATP, the first committing step of glycolysis. This Clostridium botulinum (strain Alaska E43 / Type E3) protein is ATP-dependent 6-phosphofructokinase.